The following is a 586-amino-acid chain: Eukaryotic translation initiation factor 3 subunit D (586 aa).

The interval 102–176 is disordered; it reads SAKRTFGRGG…DKPQRTREPS (75 aa). Basic and acidic residues predominate over residues 162–174; it reads GWKDYDKPQRTRE. Residues 301–315 are RNA gate; it reads SLDLVTVNENAADAP. The interval 567–586 is disordered; it reads EEEEEVAAEEQEAAEEEAEE.

Belongs to the eIF-3 subunit D family. In terms of assembly, component of the eukaryotic translation initiation factor 3 (eIF-3) complex.

The protein resides in the cytoplasm. MRNA cap-binding component of the eukaryotic translation initiation factor 3 (eIF-3) complex, which is involved in protein synthesis of a specialized repertoire of mRNAs and, together with other initiation factors, stimulates binding of mRNA and methionyl-tRNAi to the 40S ribosome. The eIF-3 complex specifically targets and initiates translation of a subset of mRNAs involved in cell proliferation. In the eIF-3 complex, eif3d specifically recognizes and binds the 7-methylguanosine cap of a subset of mRNAs. The protein is Eukaryotic translation initiation factor 3 subunit D of Aspergillus niger (strain ATCC MYA-4892 / CBS 513.88 / FGSC A1513).